The sequence spans 498 residues: Aspartyl/glutamyl-tRNA(Asn/Gln) amidotransferase subunit B (498 aa).

Belongs to the GatB/GatE family. GatB subfamily. Heterotrimer of A, B and C subunits.

It carries out the reaction L-glutamyl-tRNA(Gln) + L-glutamine + ATP + H2O = L-glutaminyl-tRNA(Gln) + L-glutamate + ADP + phosphate + H(+). The catalysed reaction is L-aspartyl-tRNA(Asn) + L-glutamine + ATP + H2O = L-asparaginyl-tRNA(Asn) + L-glutamate + ADP + phosphate + 2 H(+). In terms of biological role, allows the formation of correctly charged Asn-tRNA(Asn) or Gln-tRNA(Gln) through the transamidation of misacylated Asp-tRNA(Asn) or Glu-tRNA(Gln) in organisms which lack either or both of asparaginyl-tRNA or glutaminyl-tRNA synthetases. The reaction takes place in the presence of glutamine and ATP through an activated phospho-Asp-tRNA(Asn) or phospho-Glu-tRNA(Gln). This is Aspartyl/glutamyl-tRNA(Asn/Gln) amidotransferase subunit B from Erythrobacter litoralis (strain HTCC2594).